The sequence spans 298 residues: Phosphatidylglycerol--prolipoprotein diacylglyceryl transferase (298 aa).

3 helical membrane-spanning segments follow: residues 17–37 (LAVR…IVVG), 59–79 (MMFY…VLFY), and 97–117 (GGMS…LFAW). Position 142 (arginine 142) interacts with a 1,2-diacyl-sn-glycero-3-phospho-(1'-sn-glycerol). The next 2 helical transmembrane spans lie at 230 to 250 (MGAI…TVEF) and 257 to 277 (FLGL…PMIV).

The protein belongs to the Lgt family.

Its subcellular location is the cell inner membrane. The catalysed reaction is L-cysteinyl-[prolipoprotein] + a 1,2-diacyl-sn-glycero-3-phospho-(1'-sn-glycerol) = an S-1,2-diacyl-sn-glyceryl-L-cysteinyl-[prolipoprotein] + sn-glycerol 1-phosphate + H(+). Its pathway is protein modification; lipoprotein biosynthesis (diacylglyceryl transfer). Catalyzes the transfer of the diacylglyceryl group from phosphatidylglycerol to the sulfhydryl group of the N-terminal cysteine of a prolipoprotein, the first step in the formation of mature lipoproteins. This is Phosphatidylglycerol--prolipoprotein diacylglyceryl transferase from Burkholderia cenocepacia (strain ATCC BAA-245 / DSM 16553 / LMG 16656 / NCTC 13227 / J2315 / CF5610) (Burkholderia cepacia (strain J2315)).